Consider the following 412-residue polypeptide: Gamma-glutamyl phosphate reductase (412 aa).

Belongs to the gamma-glutamyl phosphate reductase family.

Its subcellular location is the cytoplasm. It catalyses the reaction L-glutamate 5-semialdehyde + phosphate + NADP(+) = L-glutamyl 5-phosphate + NADPH + H(+). It participates in amino-acid biosynthesis; L-proline biosynthesis; L-glutamate 5-semialdehyde from L-glutamate: step 2/2. Catalyzes the NADPH-dependent reduction of L-glutamate 5-phosphate into L-glutamate 5-semialdehyde and phosphate. The product spontaneously undergoes cyclization to form 1-pyrroline-5-carboxylate. The polypeptide is Gamma-glutamyl phosphate reductase (Bartonella quintana (strain Toulouse) (Rochalimaea quintana)).